Reading from the N-terminus, the 580-residue chain is Glutamyl-tRNA(Gln) amidotransferase subunit B-2, chloroplastic/mitochondrial (580 aa).

Composition is skewed to low complexity over residues 20–35 (RRDA…ATVS) and 42–59 (AVST…SAAV). A disordered region spans residues 20-64 (RRDATAAASTSAATVSRGRRARAVSTTTTTSSSSSSSAAVDARDA).

Belongs to the GatB/GatE family. GatB subfamily. In terms of assembly, subunit of the heterotrimeric GatCAB amidotransferase (AdT) complex, composed of A, B and C subunits.

The protein resides in the mitochondrion. It is found in the plastid. It localises to the chloroplast. It carries out the reaction L-glutamyl-tRNA(Gln) + L-glutamine + ATP + H2O = L-glutaminyl-tRNA(Gln) + L-glutamate + ADP + phosphate + H(+). Allows the formation of correctly charged Gln-tRNA(Gln) through the transamidation of misacylated Glu-tRNA(Gln) in chloroplasts and mitochondria. The reaction takes place in the presence of glutamine and ATP through an activated gamma-phospho-Glu-tRNA(Gln). This chain is Glutamyl-tRNA(Gln) amidotransferase subunit B-2, chloroplastic/mitochondrial, found in Micromonas pusilla (strain CCMP1545) (Picoplanktonic green alga).